Here is a 331-residue protein sequence, read N- to C-terminus: Hyaluronidase A (331 aa).

2 cysteine pairs are disulfide-bonded: Cys19–Cys308 and Cys185–Cys197. 2 N-linked (GlcNAc...) asparagine glycosylation sites follow: Asn79 and Asn99. The Proton donor role is filled by Glu109. N-linked (GlcNAc...) asparagine glycosylation is present at Asn127. N-linked (GlcNAc...) asparagine glycosylation occurs at Asn325.

This sequence belongs to the glycosyl hydrolase 56 family. Expressed by the venom gland.

The protein localises to the secreted. It catalyses the reaction Random hydrolysis of (1-&gt;4)-linkages between N-acetyl-beta-D-glucosamine and D-glucuronate residues in hyaluronate.. Functionally, hydrolyzes high molecular weight hyaluronic acid to produce small oligosaccharides. The polypeptide is Hyaluronidase A (Vespula vulgaris (Yellow jacket)).